A 94-amino-acid polypeptide reads, in one-letter code: DNA-directed RNA polymerase subunit omega (94 aa).

Belongs to the RNA polymerase subunit omega family. As to quaternary structure, the RNAP catalytic core consists of 2 alpha, 1 beta, 1 beta' and 1 omega subunit. When a sigma factor is associated with the core the holoenzyme is formed, which can initiate transcription.

It carries out the reaction RNA(n) + a ribonucleoside 5'-triphosphate = RNA(n+1) + diphosphate. Promotes RNA polymerase assembly. Latches the N- and C-terminal regions of the beta' subunit thereby facilitating its interaction with the beta and alpha subunits. In Photobacterium profundum (strain SS9), this protein is DNA-directed RNA polymerase subunit omega.